The following is a 337-amino-acid chain: Anthranilate phosphoribosyltransferase (337 aa).

5-phospho-alpha-D-ribose 1-diphosphate-binding positions include Gly-81, 84–85 (GD), Ser-89, 91–94 (NVST), 109–117 (KHGNRALSS), and Ala-121. Residue Gly-81 participates in anthranilate binding. Residue Ser-93 participates in Mg(2+) binding. Asn-112 is an anthranilate binding site. Position 167 (Arg-167) interacts with anthranilate. Mg(2+) contacts are provided by Asp-226 and Glu-227.

The protein belongs to the anthranilate phosphoribosyltransferase family. In terms of assembly, homodimer. Requires Mg(2+) as cofactor.

The catalysed reaction is N-(5-phospho-beta-D-ribosyl)anthranilate + diphosphate = 5-phospho-alpha-D-ribose 1-diphosphate + anthranilate. It participates in amino-acid biosynthesis; L-tryptophan biosynthesis; L-tryptophan from chorismate: step 2/5. Catalyzes the transfer of the phosphoribosyl group of 5-phosphorylribose-1-pyrophosphate (PRPP) to anthranilate to yield N-(5'-phosphoribosyl)-anthranilate (PRA). The chain is Anthranilate phosphoribosyltransferase from Nitrobacter hamburgensis (strain DSM 10229 / NCIMB 13809 / X14).